Consider the following 312-residue polypeptide: MDIIFYHPTFDTQWWIEALRKAIPQARVRAWKSGDNDSADYALVWHPPVEMLAGRDLKAVFALGAGVDSILSKLQAHPEMLKPSVPLFRLEDTGMGEQMQEYAVSQVLHWFRRFDDYRIQQNSSHWQPLPEYHREDFTIGILGAGVLGSKVAQSLQTWRFPLRCWSRTRKSWPGVQSFAGREELSAFLSQCRVLINLLPNTPETVGIINQQLLEKLPDGAYLLNLARGVHVVEDDLLAALDSGKVKGAMLDVFNREPLPPESPLWQHPRVTITPHVAAITRPAEAVEYISRTIAQLEKGERVCGQVDRARGY.

R227 is a catalytic residue. Catalysis depends on H275, which acts as the Proton donor.

The protein belongs to the D-isomer specific 2-hydroxyacid dehydrogenase family. GhrA subfamily.

The protein localises to the cytoplasm. It carries out the reaction glycolate + NADP(+) = glyoxylate + NADPH + H(+). The catalysed reaction is (R)-glycerate + NAD(+) = 3-hydroxypyruvate + NADH + H(+). The enzyme catalyses (R)-glycerate + NADP(+) = 3-hydroxypyruvate + NADPH + H(+). Its function is as follows. Catalyzes the NADPH-dependent reduction of glyoxylate and hydroxypyruvate into glycolate and glycerate, respectively. This is Glyoxylate/hydroxypyruvate reductase A from Escherichia coli (strain ATCC 8739 / DSM 1576 / NBRC 3972 / NCIMB 8545 / WDCM 00012 / Crooks).